The chain runs to 184 residues: MSVNDLRPGTTFLYDGNIYLVLEQAFSKTGRQQGKVTVKAKNMRTGARVELTFTGGEKVDKAMIERKEMQYLYNDGNDAYLMNTETYEQVSIPMTRLEWEKNFLVDGLMINMTEFENEVLGIDLPVKVELTVVEAEAAVKGDTTSGAQKKAILETGLEIMVPLFVNQGTKIIVSSADGKYVGRA.

The protein belongs to the elongation factor P family.

The protein resides in the cytoplasm. Its pathway is protein biosynthesis; polypeptide chain elongation. In terms of biological role, involved in peptide bond synthesis. Stimulates efficient translation and peptide-bond synthesis on native or reconstituted 70S ribosomes in vitro. Probably functions indirectly by altering the affinity of the ribosome for aminoacyl-tRNA, thus increasing their reactivity as acceptors for peptidyl transferase. This is Elongation factor P from Mycoplasma mycoides subsp. mycoides SC (strain CCUG 32753 / NCTC 10114 / PG1).